Reading from the N-terminus, the 88-residue chain is Small ribosomal subunit protein uS17 (88 aa).

This sequence belongs to the universal ribosomal protein uS17 family. Part of the 30S ribosomal subunit.

Its function is as follows. One of the primary rRNA binding proteins, it binds specifically to the 5'-end of 16S ribosomal RNA. This chain is Small ribosomal subunit protein uS17, found in Prochlorococcus marinus subsp. pastoris (strain CCMP1986 / NIES-2087 / MED4).